Here is a 384-residue protein sequence, read N- to C-terminus: 4-hydroxy-3-methylbut-2-en-1-yl diphosphate synthase (flavodoxin) (384 aa).

The [4Fe-4S] cluster site is built by cysteine 280, cysteine 283, cysteine 315, and glutamate 322.

The protein belongs to the IspG family. [4Fe-4S] cluster is required as a cofactor.

The enzyme catalyses (2E)-4-hydroxy-3-methylbut-2-enyl diphosphate + oxidized [flavodoxin] + H2O + 2 H(+) = 2-C-methyl-D-erythritol 2,4-cyclic diphosphate + reduced [flavodoxin]. It participates in isoprenoid biosynthesis; isopentenyl diphosphate biosynthesis via DXP pathway; isopentenyl diphosphate from 1-deoxy-D-xylulose 5-phosphate: step 5/6. Converts 2C-methyl-D-erythritol 2,4-cyclodiphosphate (ME-2,4cPP) into 1-hydroxy-2-methyl-2-(E)-butenyl 4-diphosphate. In Frankia casuarinae (strain DSM 45818 / CECT 9043 / HFP020203 / CcI3), this protein is 4-hydroxy-3-methylbut-2-en-1-yl diphosphate synthase (flavodoxin).